Here is a 338-residue protein sequence, read N- to C-terminus: Phosphatidylinositol:ceramide inositolphosphotransferase (338 aa).

At 1–36 (MTSHVTAHDVGGNEDIGTDHVPWYKQPLPLCTQVMR) the chain is on the cytoplasmic side. A helical membrane pass occupies residues 37 to 57 (FILLLLLTVMFLGVAILVANA). Residues 58–87 (RMPDPEKVRPLPDLLLESIPKVALLENGTN) lie on the Extracellular side of the membrane. The chain crosses the membrane as a helical span at residues 88–108 (VIIFLLNATTVVVGFKVFLLE). At 109–116 (RHMNGLPR) the chain is on the cytoplasmic side. Residues 117–137 (VTFLVGVPKIGSFLNRMAFGV) form a helical membrane-spanning segment. The Extracellular portion of the chain corresponds to 138 to 152 (LDSGRRPFPLKNVFP). Residues 153–173 (IMAIRFLTSYAVVMVFRAFVI) traverse the membrane as a helical segment. The Cytoplasmic segment spans residues 174 to 189 (MGTSYPATDNHCQNPQ). Residues 190–210 (VIEHPVLNVILTLVTLGSGAI) traverse the membrane as a helical segment. At 211-222 (HCGDLMFSGHTM) the chain is on the extracellular side. His-220 is a catalytic residue. A helical transmembrane segment spans residues 223–243 (ILSLAFILAWDYSPFLHPWAV). Over 244-338 (RVWVSVLLPI…TDASAALPEH (95 aa)) the chain is Cytoplasmic. Catalysis depends on residues His-264 and Asp-268.

The protein belongs to the sphingomyelin synthase family.

Its subcellular location is the membrane. Bidirectional lipid inositolphosphotransferase capable of converting phosphatidylinositol (PI) and ceramide to inositol-phosphorylceramide (IPC) and diacylglycerol (DAG) and vice versa. Direction is dependent on the relative concentrations of DAG and ceramide as phosphoinositol acceptors. Essential for viability of the pathogenic bloodstream stage of this human protozoan parasite and, consequently, can be considered as potential drug target. The chain is Phosphatidylinositol:ceramide inositolphosphotransferase from Leishmania major.